A 143-amino-acid polypeptide reads, in one-letter code: Mannitol-specific phosphotransferase enzyme IIA component (143 aa).

The PTS EIIA type-2 domain maps to 2–142 (QVLAKENIKL…EDLIAIFNEV (141 aa)). The active-site Tele-phosphohistidine intermediate is the H62. H62 carries the phosphohistidine; by HPr modification. Residue S74 is modified to Phosphoserine.

The protein resides in the cytoplasm. Functionally, the phosphoenolpyruvate-dependent sugar phosphotransferase system (sugar PTS), a major carbohydrate active transport system, catalyzes the phosphorylation of incoming sugar substrates concomitantly with their translocation across the cell membrane. The enzyme II CmtAB PTS system is involved in D-mannitol transport. The sequence is that of Mannitol-specific phosphotransferase enzyme IIA component (mtlF) from Bacillus subtilis (strain 168).